A 366-amino-acid chain; its full sequence is tRNA/tmRNA (uracil-C(5))-methyltransferase (366 aa).

S-adenosyl-L-methionine-binding residues include Gln190, Tyr218, Asn223, Glu239, and Asp299. Cys324 acts as the Nucleophile in catalysis. Glu358 functions as the Proton acceptor in the catalytic mechanism.

Belongs to the class I-like SAM-binding methyltransferase superfamily. RNA M5U methyltransferase family. TrmA subfamily.

The enzyme catalyses uridine(54) in tRNA + S-adenosyl-L-methionine = 5-methyluridine(54) in tRNA + S-adenosyl-L-homocysteine + H(+). The catalysed reaction is uridine(341) in tmRNA + S-adenosyl-L-methionine = 5-methyluridine(341) in tmRNA + S-adenosyl-L-homocysteine + H(+). Functionally, dual-specificity methyltransferase that catalyzes the formation of 5-methyluridine at position 54 (m5U54) in all tRNAs, and that of position 341 (m5U341) in tmRNA (transfer-mRNA). The protein is tRNA/tmRNA (uracil-C(5))-methyltransferase of Escherichia coli O157:H7 (strain EC4115 / EHEC).